The sequence spans 530 residues: Cytochrome P450 2U1 (530 aa).

4 helical membrane-spanning segments follow: residues 21-41, 99-119, 247-267, and 328-348; these read LQAV…DWVW, VYGN…LSDF, ICLH…YLPF, and LFYI…NSLL. Cys476 is a heme binding site. The chain crosses the membrane as a helical span at residues 481-501; that stretch reads LAKMELFLMFVSLMQSFTFAL.

This sequence belongs to the cytochrome P450 family. It depends on heme as a cofactor. In terms of tissue distribution, specifically expressed in thymus and brain. In brain, expressed in cortex, cerebellum, olfactory bulbs, pons and medulla and the limbic structures (at protein level).

The protein resides in the endoplasmic reticulum membrane. Its subcellular location is the microsome membrane. The protein localises to the mitochondrion inner membrane. It catalyses the reaction an omega-methyl-long-chain fatty acid + reduced [NADPH--hemoprotein reductase] + O2 = an omega-hydroxy-long-chain fatty acid + oxidized [NADPH--hemoprotein reductase] + H2O + H(+). It carries out the reaction (5Z,8Z,11Z,14Z)-eicosatetraenoate + reduced [NADPH--hemoprotein reductase] + O2 = 19-hydroxy-(5Z,8Z,11Z,14Z)-eicosatetraenoate + oxidized [NADPH--hemoprotein reductase] + H2O + H(+). The catalysed reaction is (5Z,8Z,11Z,14Z)-eicosatetraenoate + reduced [NADPH--hemoprotein reductase] + O2 = 20-hydroxy-(5Z,8Z,11Z,14Z)-eicosatetraenoate + oxidized [NADPH--hemoprotein reductase] + H2O + H(+). The enzyme catalyses N-[(5Z,8Z,11Z,14Z)-eicosatetraenoyl]-serotonin + reduced [NADPH--hemoprotein reductase] + O2 = 2-oxo-N-[(5Z,8Z,11Z,14Z)-eicosatetraenoyl]-serotonin + oxidized [NADPH--hemoprotein reductase] + H2O + H(+). Functionally, a cytochrome P450 monooxygenase involved in the metabolism of arachidonic acid and its conjugates. Mechanistically, uses molecular oxygen inserting one oxygen atom into a substrate, and reducing the second into a water molecule, with two electrons provided by NADPH via cytochrome P450 reductase (CPR; NADPH-ferrihemoprotein reductase). Acts as an omega and omega-1 hydroxylase for arachidonic acid and possibly for other long chain fatty acids. May modulate the arachidonic acid signaling pathway and play a role in other fatty acid signaling processes. May down-regulate the biological activities of N-arachidonoyl-serotonin, an endocannabinoid that has anti-nociceptive effects through inhibition of fatty acid amide hydrolase FAAH, TRPV1 receptor and T-type calcium channels. Catalyzes C-2 oxidation of the indole ring of N-arachidonoyl-serotonin forming a less active product 2-oxo-N-arachidonoyl-serotonin. This Rattus norvegicus (Rat) protein is Cytochrome P450 2U1 (Cyp2u1).